Reading from the N-terminus, the 310-residue chain is Ribonuclease Z (310 aa).

7 residues coordinate Zn(2+): H64, H66, D68, H69, H146, D215, and H273. Catalysis depends on D68, which acts as the Proton acceptor.

It belongs to the RNase Z family. Homodimer. The cofactor is Zn(2+).

It catalyses the reaction Endonucleolytic cleavage of RNA, removing extra 3' nucleotides from tRNA precursor, generating 3' termini of tRNAs. A 3'-hydroxy group is left at the tRNA terminus and a 5'-phosphoryl group is left at the trailer molecule.. Functionally, zinc phosphodiesterase, which displays some tRNA 3'-processing endonuclease activity. Probably involved in tRNA maturation, by removing a 3'-trailer from precursor tRNA. This is Ribonuclease Z from Aeropyrum pernix (strain ATCC 700893 / DSM 11879 / JCM 9820 / NBRC 100138 / K1).